A 706-amino-acid polypeptide reads, in one-letter code: D-(-)-3-hydroxybutyrate oligomer hydrolase (706 aa).

The N-terminal stretch at 1 to 27 (MTIIIAGKNTLTLTSLAAAVLALGACG) is a signal peptide. Serine 311 functions as the Charge relay system in the catalytic mechanism.

It belongs to the D-(-)-3-hydroxybutyrate oligomer hydrolase family.

The protein resides in the secreted. The enzyme catalyses (3R)-hydroxybutanoate dimer + H2O = 2 (R)-3-hydroxybutanoate + H(+). The protein operates within lipid metabolism; butanoate metabolism. Its function is as follows. Participates in the degradation of poly-3-hydroxybutyrate (PHB). It works downstream of poly(3-hydroxybutyrate) depolymerase, hydrolyzing D(-)-3-hydroxybutyrate oligomers of various length (3HB-oligomers) into 3HB-monomers. The sequence is that of D-(-)-3-hydroxybutyrate oligomer hydrolase from Polaromonas naphthalenivorans (strain CJ2).